We begin with the raw amino-acid sequence, 161 residues long: SsrA-binding protein (161 aa).

The segment covering R139–R153 has biased composition (basic and acidic residues). The segment at R139–E161 is disordered.

It belongs to the SmpB family.

It localises to the cytoplasm. Its function is as follows. Required for rescue of stalled ribosomes mediated by trans-translation. Binds to transfer-messenger RNA (tmRNA), required for stable association of tmRNA with ribosomes. tmRNA and SmpB together mimic tRNA shape, replacing the anticodon stem-loop with SmpB. tmRNA is encoded by the ssrA gene; the 2 termini fold to resemble tRNA(Ala) and it encodes a 'tag peptide', a short internal open reading frame. During trans-translation Ala-aminoacylated tmRNA acts like a tRNA, entering the A-site of stalled ribosomes, displacing the stalled mRNA. The ribosome then switches to translate the ORF on the tmRNA; the nascent peptide is terminated with the 'tag peptide' encoded by the tmRNA and targeted for degradation. The ribosome is freed to recommence translation, which seems to be the essential function of trans-translation. The protein is SsrA-binding protein of Syntrophobacter fumaroxidans (strain DSM 10017 / MPOB).